The following is a 449-amino-acid chain: NADH-quinone oxidoreductase subunit H (449 aa).

9 helical membrane passes run 26–46 (FWLI…MTLF), 96–116 (PIFI…FAVI), 136–156 (LPVS…GLIL), 177–197 (IISY…YAGT), 211–231 (WYIA…GETN), 259–279 (FFFL…TTLF), 298–318 (WVPL…FIWL), 330–350 (FMAF…LVIA), and 365–385 (WLIG…LDPG). A disordered region spans residues 396 to 449 (AERRKLAEAPSLESIPWPPPPPGGAHHRPAVPAGTSANGSSTVIPADPPPRQES).

It belongs to the complex I subunit 1 family. As to quaternary structure, NDH-1 is composed of 14 different subunits. Subunits NuoA, H, J, K, L, M, N constitute the membrane sector of the complex.

It is found in the cell membrane. The enzyme catalyses a quinone + NADH + 5 H(+)(in) = a quinol + NAD(+) + 4 H(+)(out). Its function is as follows. NDH-1 shuttles electrons from NADH, via FMN and iron-sulfur (Fe-S) centers, to quinones in the respiratory chain. The immediate electron acceptor for the enzyme in this species is believed to be ubiquinone. Couples the redox reaction to proton translocation (for every two electrons transferred, four hydrogen ions are translocated across the cytoplasmic membrane), and thus conserves the redox energy in a proton gradient. This subunit may bind ubiquinone. This chain is NADH-quinone oxidoreductase subunit H, found in Frankia alni (strain DSM 45986 / CECT 9034 / ACN14a).